A 369-amino-acid polypeptide reads, in one-letter code: Coproporphyrin III ferrochelatase (369 aa).

The Fe-coproporphyrin III site is built by S61 and Y130. 2 residues coordinate Fe(2+): H197 and E286.

This sequence belongs to the ferrochelatase family.

The protein resides in the cytoplasm. It carries out the reaction Fe-coproporphyrin III + 2 H(+) = coproporphyrin III + Fe(2+). Its pathway is porphyrin-containing compound metabolism; protoheme biosynthesis. Functionally, involved in coproporphyrin-dependent heme b biosynthesis. Catalyzes the insertion of ferrous iron into coproporphyrin III to form Fe-coproporphyrin III. The chain is Coproporphyrin III ferrochelatase from Corynebacterium diphtheriae (strain ATCC 700971 / NCTC 13129 / Biotype gravis).